The primary structure comprises 152 residues: Cornifin-A (152 aa).

The tract at residues 20-40 (EVKQPCQPPPQEPCAPKTKEP) is disordered. 14 consecutive repeat copies span residues 27–34 (PPPQEPCA), 35–42 (PKTKEPCH), 43–49 (PIPEPCN), 50–57 (PKVPEPCQ), 58–65 (PKVPEPCQ), 66–73 (PKVPEPCQ), 74–81 (PKVPEPCQ), 82–89 (PKVPEPCQ), 90–97 (PKVPEPCQ), 98–105 (PKVPEPCH), 106–113 (PKAPEPCH), 114–121 (PVVPEPCQ), 122–129 (PVAPEPCQ), and 130–137 (PVVPEPCP). The segment at 27-137 (PPPQEPCAPK…CQPVVPEPCP (111 aa)) is 14 X 8 AA approximate tandem repeats.

It belongs to the cornifin (SPRR) family. In terms of tissue distribution, in squamous epithelia lining the nasal vestibule and in the hard palate.

The protein localises to the cytoplasm. Functionally, cross-linked envelope protein of keratinocytes. It is a keratinocyte protein that first appears in the cell cytosol, but ultimately becomes cross-linked to membrane proteins by transglutaminase. All that results in the formation of an insoluble envelope beneath the plasma membrane. The protein is Cornifin-A (Sprr1a) of Rattus norvegicus (Rat).